Here is a 430-residue protein sequence, read N- to C-terminus: ATP-dependent RNA helicase RhlB (430 aa).

Positions 9–37 (QKFSDFALHPQVIEALESKGFHYCTPIQA) match the Q motif motif. The Helicase ATP-binding domain maps to 40 to 219 (LPLTLSGRDV…FEQMNNAEYV (180 aa)). 53–60 (AQTGTGKT) serves as a coordination point for ATP. Positions 165–168 (DEAD) match the DEAD box motif. Residues 245 to 390 (RLLQTLLEEE…LSKYNSDALM (146 aa)) form the Helicase C-terminal domain. Residues 392–430 (DLPAPKRLTRPPRSNNGPRRHNSAPRRSGAPRNNRKRAD) form a disordered region.

The protein belongs to the DEAD box helicase family. RhlB subfamily. Component of the RNA degradosome, which is a multiprotein complex involved in RNA processing and mRNA degradation.

Its subcellular location is the cytoplasm. The catalysed reaction is ATP + H2O = ADP + phosphate + H(+). DEAD-box RNA helicase involved in RNA degradation. Has RNA-dependent ATPase activity and unwinds double-stranded RNA. The chain is ATP-dependent RNA helicase RhlB from Pectobacterium atrosepticum (strain SCRI 1043 / ATCC BAA-672) (Erwinia carotovora subsp. atroseptica).